Consider the following 412-residue polypeptide: Argininosuccinate synthase (412 aa).

ATP contacts are provided by residues 15–23 (AYSGGLDTS) and Ala42. Residues Tyr93 and Ser98 each coordinate L-citrulline. Gly123 is an ATP binding site. Residues Thr125, Asn129, and Asp130 each coordinate L-aspartate. Residue Asn129 participates in L-citrulline binding. Positions 133, 185, 194, 270, and 282 each coordinate L-citrulline.

The protein belongs to the argininosuccinate synthase family. Type 1 subfamily. As to quaternary structure, homotetramer.

The protein resides in the cytoplasm. The enzyme catalyses L-citrulline + L-aspartate + ATP = 2-(N(omega)-L-arginino)succinate + AMP + diphosphate + H(+). Its pathway is amino-acid biosynthesis; L-arginine biosynthesis; L-arginine from L-ornithine and carbamoyl phosphate: step 2/3. The sequence is that of Argininosuccinate synthase from Psychrobacter arcticus (strain DSM 17307 / VKM B-2377 / 273-4).